The primary structure comprises 338 residues: Lipoate-protein ligase A (338 aa).

The 188-residue stretch at 29-216 (PATQRVLFLW…AFFEHYSERV (188 aa)) folds into the BPL/LPL catalytic domain. Residues R71, 76–79 (GAVF), and K134 each bind ATP. (R)-lipoate is bound at residue K134.

This sequence belongs to the LplA family. Monomer.

It localises to the cytoplasm. It carries out the reaction L-lysyl-[lipoyl-carrier protein] + (R)-lipoate + ATP = N(6)-[(R)-lipoyl]-L-lysyl-[lipoyl-carrier protein] + AMP + diphosphate + H(+). Its pathway is protein modification; protein lipoylation via exogenous pathway; protein N(6)-(lipoyl)lysine from lipoate: step 1/2. The protein operates within protein modification; protein lipoylation via exogenous pathway; protein N(6)-(lipoyl)lysine from lipoate: step 2/2. In terms of biological role, catalyzes both the ATP-dependent activation of exogenously supplied lipoate to lipoyl-AMP and the transfer of the activated lipoyl onto the lipoyl domains of lipoate-dependent enzymes. The protein is Lipoate-protein ligase A of Enterobacter sp. (strain 638).